The chain runs to 390 residues: GTPase Obg (390 aa).

Residues 1–159 (MKFVDEASIL…RDLLLELMLL (159 aa)) enclose the Obg domain. The segment at 127–147 (NTRFKSSVNRTPRQKTNGTPG) is disordered. A compositionally biased stretch (polar residues) spans 129-145 (RFKSSVNRTPRQKTNGT). Residues 160 to 333 (ADVGMLGMPN…LCWDVMTFII (174 aa)) form the OBG-type G domain. GTP contacts are provided by residues 166–173 (GMPNAGKS), 191–195 (FTTLV), 213–216 (DIPG), 283–286 (NKID), and 314–316 (SAA). Mg(2+) is bound by residues Ser-173 and Thr-193.

The protein belongs to the TRAFAC class OBG-HflX-like GTPase superfamily. OBG GTPase family. In terms of assembly, monomer. The cofactor is Mg(2+).

The protein resides in the cytoplasm. Functionally, an essential GTPase which binds GTP, GDP and possibly (p)ppGpp with moderate affinity, with high nucleotide exchange rates and a fairly low GTP hydrolysis rate. Plays a role in control of the cell cycle, stress response, ribosome biogenesis and in those bacteria that undergo differentiation, in morphogenesis control. The polypeptide is GTPase Obg (Salmonella gallinarum (strain 287/91 / NCTC 13346)).